A 346-amino-acid chain; its full sequence is MVEFFTQTTTGAILLILLQCLLLVVPLLVALAFLMYADRKIWAAVMMRKGPNVVGAFGLLQSFADFLKYIVKEIVVPAGADRAVYFLAPIVSLVMALIAWAVIPFNDGWVLSSLNVAVLYVFAVSSLEVYGVIMGGWASNSKYPFLGSLRSAAQMISYEVSIGLIIIGVIISTGSMNFTAIVHAQDGDLGLLNWYFLPHFPMLFLFFISALAETNRPPFDLPEAEAELVAGYQVEYSSTPFLLFMIGELVAVVLMCALTVLLFFGGWLSPIPGLPDGVFWMILKMLAVFFMFSMVKAIVPRYRYDQLMRLGWKVFLPFSLFWVVFVAFMARYEVLGGFWARFAVGG.

The next 9 membrane-spanning stretches (helical) occupy residues 13 to 33, 51 to 71, 83 to 103, 116 to 136, 162 to 182, 191 to 211, 244 to 264, 278 to 298, and 310 to 330; these read ILLI…ALAF, PNVV…KYIV, AVYF…WAVI, VAVL…IMGG, IGLI…TAIV, LLNW…ISAL, FMIG…LLFF, VFWM…VKAI, and LGWK…AFMA.

It belongs to the complex I subunit 1 family. In terms of assembly, NDH-1 is composed of 14 different subunits. Subunits NuoA, H, J, K, L, M, N constitute the membrane sector of the complex.

It is found in the cell inner membrane. The enzyme catalyses a quinone + NADH + 5 H(+)(in) = a quinol + NAD(+) + 4 H(+)(out). NDH-1 shuttles electrons from NADH, via FMN and iron-sulfur (Fe-S) centers, to quinones in the respiratory chain. The immediate electron acceptor for the enzyme in this species is believed to be ubiquinone. Couples the redox reaction to proton translocation (for every two electrons transferred, four hydrogen ions are translocated across the cytoplasmic membrane), and thus conserves the redox energy in a proton gradient. This subunit may bind ubiquinone. The chain is NADH-quinone oxidoreductase subunit H from Jannaschia sp. (strain CCS1).